The primary structure comprises 100 residues: Urease subunit gamma (100 aa).

Belongs to the urease gamma subunit family. Heterotrimer of UreA (gamma), UreB (beta) and UreC (alpha) subunits. Three heterotrimers associate to form the active enzyme.

It is found in the cytoplasm. The catalysed reaction is urea + 2 H2O + H(+) = hydrogencarbonate + 2 NH4(+). It functions in the pathway nitrogen metabolism; urea degradation; CO(2) and NH(3) from urea (urease route): step 1/1. The sequence is that of Urease subunit gamma from Escherichia coli O157:H7 (strain EC4115 / EHEC).